The chain runs to 364 residues: Methylthioribose-1-phosphate isomerase (364 aa).

The active-site Proton donor is Asp254.

The protein belongs to the eIF-2B alpha/beta/delta subunits family. MtnA subfamily.

It is found in the cytoplasm. The protein localises to the nucleus. It carries out the reaction 5-(methylsulfanyl)-alpha-D-ribose 1-phosphate = 5-(methylsulfanyl)-D-ribulose 1-phosphate. Its pathway is amino-acid biosynthesis; L-methionine biosynthesis via salvage pathway; L-methionine from S-methyl-5-thio-alpha-D-ribose 1-phosphate: step 1/6. Its function is as follows. Catalyzes the interconversion of methylthioribose-1-phosphate (MTR-1-P) into methylthioribulose-1-phosphate (MTRu-1-P). The chain is Methylthioribose-1-phosphate isomerase from Drosophila melanogaster (Fruit fly).